A 329-amino-acid polypeptide reads, in one-letter code: MTALDIEEIPGVGPATADRLRDAGYITVESIATATPVDLAEAAELGESTTKKIIKAAREMADIGGFKTGTDILARRQDVLKLKTLVPEIDELFGGGLETQAITELYGEFGSGKSQIAHQLAVNCQLPQELGGLGGSCLYIDTENTFRPERIEQMAEGLELADLPEGYVVPTPDEFLANIHVARAHSSDHQMLLIDAARELSNELTASGLPVKLVIIDSLTSLFRSEYAGRGTLAGRQQKLNRHMHDLFKLVDDLNAVALVTNQVMANPGLLFGDPTKPIGGNIVGHTATYRVYLRKSKAGKRIARLVDSPNLPEGEATFMVETAGIKPC.

107 to 114 (GEFGSGKS) serves as a coordination point for ATP.

This sequence belongs to the eukaryotic RecA-like protein family.

Functionally, involved in DNA repair and in homologous recombination. Binds and assemble on single-stranded DNA to form a nucleoprotein filament. Hydrolyzes ATP in a ssDNA-dependent manner and promotes DNA strand exchange between homologous DNA molecules. In Methanocorpusculum labreanum (strain ATCC 43576 / DSM 4855 / Z), this protein is DNA repair and recombination protein RadA.